A 572-amino-acid polypeptide reads, in one-letter code: Adenine deaminase (572 aa).

The protein belongs to the metallo-dependent hydrolases superfamily. Adenine deaminase family. The cofactor is Mn(2+).

The catalysed reaction is adenine + H2O + H(+) = hypoxanthine + NH4(+). The sequence is that of Adenine deaminase from Clostridium perfringens (strain 13 / Type A).